Reading from the N-terminus, the 288-residue chain is 2-hydroxy-6-oxononadienedioate/2-hydroxy-6-oxononatrienedioate hydrolase (288 aa).

Residue His267 is the Proton acceptor of the active site.

Belongs to the AB hydrolase superfamily. MhpC family. In terms of assembly, homodimer.

The enzyme catalyses (2Z,4E)-2-hydroxy-6-oxonona-2,4-dienedioate + H2O = (2Z)-2-hydroxypenta-2,4-dienoate + succinate + H(+). It catalyses the reaction (2Z,4E,7E)-2-hydroxy-6-oxonona-2,4,7-trienedioate + H2O = (2Z)-2-hydroxypenta-2,4-dienoate + fumarate + H(+). Its pathway is aromatic compound metabolism; 3-phenylpropanoate degradation. Catalyzes the cleavage of the C5-C6 bond of 2-hydroxy-6-oxononadienedioate and 2-hydroxy-6-oxononatrienedioate, a dienol ring fission product of the bacterial meta-cleavage pathway for degradation of phenylpropionic acid. The protein is 2-hydroxy-6-oxononadienedioate/2-hydroxy-6-oxononatrienedioate hydrolase of Klebsiella pneumoniae subsp. pneumoniae (strain ATCC 700721 / MGH 78578).